Reading from the N-terminus, the 249-residue chain is 2,3-bisphosphoglycerate-dependent phosphoglycerate mutase (249 aa).

Substrate contacts are provided by residues 9–16 (RHGQSQWN), 22–23 (TG), arginine 61, 88–91 (ERHY), lysine 99, 115–116 (RR), and 184–185 (GN). Residue histidine 10 is the Tele-phosphohistidine intermediate of the active site. Glutamate 88 (proton donor/acceptor) is an active-site residue.

Belongs to the phosphoglycerate mutase family. BPG-dependent PGAM subfamily. As to quaternary structure, homodimer.

The catalysed reaction is (2R)-2-phosphoglycerate = (2R)-3-phosphoglycerate. It functions in the pathway carbohydrate degradation; glycolysis; pyruvate from D-glyceraldehyde 3-phosphate: step 3/5. Its function is as follows. Catalyzes the interconversion of 2-phosphoglycerate and 3-phosphoglycerate. The sequence is that of 2,3-bisphosphoglycerate-dependent phosphoglycerate mutase from Xylella fastidiosa (strain M23).